Here is a 26-residue protein sequence, read N- to C-terminus: Acetyl-CoA acetyltransferase (26 aa).

The Acyl-thioester intermediate role is filled by cysteine 21.

Belongs to the thiolase-like superfamily. Thiolase family. In terms of assembly, homotetramer. In terms of processing, succinylation, adjacent to a coenzyme A binding site. Desuccinylated by SIRT5.

It is found in the mitochondrion. The enzyme catalyses 2 acetyl-CoA = acetoacetyl-CoA + CoA. This is Acetyl-CoA acetyltransferase from Sus scrofa (Pig).